The chain runs to 400 residues: D-alanyl-D-alanine carboxypeptidase DacC (400 aa).

A signal peptide spans 1–27 (MTQYSSLLRGLAAGSAFLFLFAPTAFA). Ser66 serves as the catalytic Acyl-ester intermediate. Lys69 acts as the Proton acceptor in catalysis. Residue Ser132 is part of the active site. Substrate is bound at residue Lys235. The required for inner membrane binding stretch occupies residues 383 to 400 (VWDFVMMKFHQWFGSWFS).

This sequence belongs to the peptidase S11 family.

The protein resides in the cell inner membrane. The enzyme catalyses Preferential cleavage: (Ac)2-L-Lys-D-Ala-|-D-Ala. Also transpeptidation of peptidyl-alanyl moieties that are N-acyl substituents of D-alanine.. Its pathway is cell wall biogenesis; peptidoglycan biosynthesis. Functionally, removes C-terminal D-alanyl residues from sugar-peptide cell wall precursors. The chain is D-alanyl-D-alanine carboxypeptidase DacC (dacC) from Escherichia coli (strain K12).